Here is a 238-residue protein sequence, read N- to C-terminus: Ubiquinone biosynthesis O-methyltransferase (238 aa).

S-adenosyl-L-methionine contacts are provided by Arg-40, Gly-59, Asp-80, and Met-125.

It belongs to the methyltransferase superfamily. UbiG/COQ3 family.

The enzyme catalyses a 3-demethylubiquinol + S-adenosyl-L-methionine = a ubiquinol + S-adenosyl-L-homocysteine + H(+). The catalysed reaction is a 3-(all-trans-polyprenyl)benzene-1,2-diol + S-adenosyl-L-methionine = a 2-methoxy-6-(all-trans-polyprenyl)phenol + S-adenosyl-L-homocysteine + H(+). Its pathway is cofactor biosynthesis; ubiquinone biosynthesis. Its function is as follows. O-methyltransferase that catalyzes the 2 O-methylation steps in the ubiquinone biosynthetic pathway. This is Ubiquinone biosynthesis O-methyltransferase from Paracidovorax citrulli (strain AAC00-1) (Acidovorax citrulli).